The sequence spans 174 residues: Phosphopantetheine adenylyltransferase (174 aa).

Position 10 (Thr10) interacts with substrate. Residues 10–11 (TF) and His18 each bind ATP. Substrate contacts are provided by Lys44, Leu76, and Arg90. Residues 91 to 93 (GLR), Glu101, and 126 to 132 (HAYISSS) each bind ATP.

The protein belongs to the bacterial CoaD family. In terms of assembly, homohexamer. Mg(2+) serves as cofactor.

Its subcellular location is the cytoplasm. The catalysed reaction is (R)-4'-phosphopantetheine + ATP + H(+) = 3'-dephospho-CoA + diphosphate. Its pathway is cofactor biosynthesis; coenzyme A biosynthesis; CoA from (R)-pantothenate: step 4/5. Reversibly transfers an adenylyl group from ATP to 4'-phosphopantetheine, yielding dephospho-CoA (dPCoA) and pyrophosphate. This is Phosphopantetheine adenylyltransferase from Alkalilimnicola ehrlichii (strain ATCC BAA-1101 / DSM 17681 / MLHE-1).